A 525-amino-acid polypeptide reads, in one-letter code: BTB/POZ domain-containing protein At1g50280 (525 aa).

The 75-residue stretch at asparagine 5–aspartate 79 folds into the BTB domain. The NPH3 domain occupies glutamate 200–asparagine 466.

The protein belongs to the NPH3 family.

The protein operates within protein modification; protein ubiquitination. Functionally, may act as a substrate-specific adapter of an E3 ubiquitin-protein ligase complex (CUL3-RBX1-BTB) which mediates the ubiquitination and subsequent proteasomal degradation of target proteins. This chain is BTB/POZ domain-containing protein At1g50280, found in Arabidopsis thaliana (Mouse-ear cress).